We begin with the raw amino-acid sequence, 530 residues long: Alkali-sensitive linkage protein 1 (530 aa).

Positions 1-18 (MRTTFATVALAFLSTVGA) are cleaved as a signal peptide. Asn55 carries N-linked (GlcNAc...) asparagine glycosylation. The disordered stretch occupies residues 69–90 (SVTESSDDGASTALPTTSTESV). 2 N-linked (GlcNAc...) asparagine glycosylation sites follow: Asn120 and Asn128.

The protein resides in the endoplasmic reticulum. It localises to the golgi apparatus. The protein localises to the secreted. It is found in the cell wall. This is Alkali-sensitive linkage protein 1 (asl1) from Schizosaccharomyces pombe (strain 972 / ATCC 24843) (Fission yeast).